Consider the following 322-residue polypeptide: Beta-ketoacyl-[acyl-carrier-protein] synthase III (322 aa).

Catalysis depends on residues Cys113 and His247. The ACP-binding stretch occupies residues 248-252; the sequence is QANIR. Asn278 is an active-site residue.

It belongs to the thiolase-like superfamily. FabH family. As to quaternary structure, homodimer.

It localises to the cytoplasm. It carries out the reaction malonyl-[ACP] + acetyl-CoA + H(+) = 3-oxobutanoyl-[ACP] + CO2 + CoA. It participates in lipid metabolism; fatty acid biosynthesis. Catalyzes the condensation reaction of fatty acid synthesis by the addition to an acyl acceptor of two carbons from malonyl-ACP. Catalyzes the first condensation reaction which initiates fatty acid synthesis and may therefore play a role in governing the total rate of fatty acid production. Possesses both acetoacetyl-ACP synthase and acetyl transacylase activities. Its substrate specificity determines the biosynthesis of branched-chain and/or straight-chain of fatty acids. The chain is Beta-ketoacyl-[acyl-carrier-protein] synthase III from Tropheryma whipplei (strain TW08/27) (Whipple's bacillus).